The chain runs to 151 residues: Probable cGMP 3',5'-cyclic phosphodiesterase subunit delta (151 aa).

It belongs to the PDE6D/unc-119 family. As to quaternary structure, interacts with Pde6.

The protein localises to the nucleus. It localises to the cytoplasm. The sequence is that of Probable cGMP 3',5'-cyclic phosphodiesterase subunit delta from Drosophila grimshawi (Hawaiian fruit fly).